The chain runs to 205 residues: Putative 3-methyladenine DNA glycosylase (205 aa).

It belongs to the DNA glycosylase MPG family.

This Clostridium acetobutylicum (strain ATCC 824 / DSM 792 / JCM 1419 / IAM 19013 / LMG 5710 / NBRC 13948 / NRRL B-527 / VKM B-1787 / 2291 / W) protein is Putative 3-methyladenine DNA glycosylase.